Consider the following 197-residue polypeptide: 7-methyl-GTP pyrophosphatase (197 aa).

Catalysis depends on D69, which acts as the Proton acceptor.

Belongs to the Maf family. YceF subfamily. A divalent metal cation serves as cofactor.

Its subcellular location is the cytoplasm. It catalyses the reaction N(7)-methyl-GTP + H2O = N(7)-methyl-GMP + diphosphate + H(+). Functionally, nucleoside triphosphate pyrophosphatase that hydrolyzes 7-methyl-GTP (m(7)GTP). May have a dual role in cell division arrest and in preventing the incorporation of modified nucleotides into cellular nucleic acids. This Syntrophotalea carbinolica (strain DSM 2380 / NBRC 103641 / GraBd1) (Pelobacter carbinolicus) protein is 7-methyl-GTP pyrophosphatase.